The primary structure comprises 530 residues: Asc-type amino acid transporter 1 (530 aa).

Positions 1–36 (MRRDSDMASHIQQPGGHGNPGPAPSPSPGPGPGPGA) are disordered. Pro residues predominate over residues 21–33 (GPAPSPSPGPGPG). 10 helical membrane-spanning segments follow: residues 46-66 (IGLV…GIFI), 78-98 (VGLA…GSLC), 119-139 (IFGG…MYPT), 192-212 (IQVI…TVGF), 274-294 (AIFI…VAYF), 316-336 (LLGY…FGGI), 368-388 (CTPI…MLVG), 394-414 (INYV…GLLV), 430-450 (LLVP…SFIS), and 454-474 (VCGV…LGVF). The tract at residues 508–530 (EEENGPMGQPSPLPITDKPLKTQ) is disordered.

The protein belongs to the amino acid-polyamine-organocation (APC) superfamily. In terms of assembly, disulfide-linked heterodimer with the amino acid transport protein SLC3A2/4F2hc.

The protein resides in the cell membrane. It carries out the reaction L-alanine(in) + glycine(out) = L-alanine(out) + glycine(in). The catalysed reaction is L-serine(out) + L-alanine(in) = L-serine(in) + L-alanine(out). It catalyses the reaction L-threonine(out) + L-alanine(in) = L-threonine(in) + L-alanine(out). The enzyme catalyses L-cysteine(out) + L-alanine(in) = L-cysteine(in) + L-alanine(out). It carries out the reaction 2-aminoisobutanoate(out) + L-alanine(in) = 2-aminoisobutanoate(in) + L-alanine(out). The catalysed reaction is D-serine(out) + L-alanine(in) = D-serine(in) + L-alanine(out). It catalyses the reaction D-alanine(out) + L-alanine(in) = D-alanine(in) + L-alanine(out). The enzyme catalyses L-valine(out) + L-alanine(in) = L-valine(in) + L-alanine(out). It carries out the reaction L-methionine(out) + L-alanine(in) = L-methionine(in) + L-alanine(out). The catalysed reaction is beta-alanine(out) + L-alanine(in) = beta-alanine(in) + L-alanine(out). It catalyses the reaction D-cysteine(out) + L-alanine(in) = D-cysteine(in) + L-alanine(out). The enzyme catalyses D-threonine(out) + L-alanine(in) = D-threonine(in) + L-alanine(out). It carries out the reaction D-isoleucine(out) + D-serine(in) = D-isoleucine(in) + D-serine(out). The catalysed reaction is D-serine(in) = D-serine(out). Functionally, associates with SLC3A2/4F2hc to form a functional heterodimeric complex that translocates small neutral L- and D-amino acids across the plasma membrane. Preferentially mediates exchange transport, but can also operate via facilitated diffusion. Acts as a major transporter for glycine, L- and D-serine in the central nervous system. At the spinal cord and brainstem regulates glycine metabolism and glycinergic inhibitory neurotransmission by providing for glycine de novo synthesis from L-serine and glycine recycling from astrocytes to glycinergic motor neurons. At Schaffer collateral-CA1 synapses mediates D-serine and glycine release that modulates post-synaptic activation of NMDA receptors and excitatory glutamatergic transmission. May regulate D-serine release from mesenchymal progenitors located in developing subcutaneous adipose tissue, favoring white adipocyte over thermogenic beige adipocyte lineage commitment. In Rattus norvegicus (Rat), this protein is Asc-type amino acid transporter 1 (Slc7a10).